The primary structure comprises 544 residues: Probable protein kinase UbiB (544 aa).

One can recognise a Protein kinase domain in the interval 123 to 501 (DFDIKPLASA…KRQQGTGKFL (379 aa)). ATP is bound by residues 129–137 (LASASIAQV) and Lys-152. The active-site Proton acceptor is Asp-287. The next 2 helical transmembrane spans lie at 496-516 (GTGKFLFGVGATLVVCSAIWI) and 519-539 (QLEPLAIGSATIGVLCWLLSW).

The protein belongs to the ABC1 family. UbiB subfamily.

Its subcellular location is the cell inner membrane. It participates in cofactor biosynthesis; ubiquinone biosynthesis [regulation]. Is probably a protein kinase regulator of UbiI activity which is involved in aerobic coenzyme Q (ubiquinone) biosynthesis. This chain is Probable protein kinase UbiB, found in Vibrio cholerae serotype O1 (strain ATCC 39541 / Classical Ogawa 395 / O395).